A 357-amino-acid polypeptide reads, in one-letter code: NADH-quinone oxidoreductase subunit H (357 aa).

8 consecutive transmembrane segments (helical) span residues 20–40, 92–112, 127–147, 165–185, 206–226, 268–288, 294–314, and 329–349; these read WLVV…ILCV, ILFI…WAVV, LLYV…AGWA, VSYE…SGSL, FLSW…ISAV, ILLS…PIDI, IPGW…FIWF, and LGWK…AIWM.

It belongs to the complex I subunit 1 family. As to quaternary structure, NDH-1 is composed of 14 different subunits. Subunits NuoA, H, J, K, L, M, N constitute the membrane sector of the complex.

Its subcellular location is the cell inner membrane. It carries out the reaction a quinone + NADH + 5 H(+)(in) = a quinol + NAD(+) + 4 H(+)(out). Its function is as follows. NDH-1 shuttles electrons from NADH, via FMN and iron-sulfur (Fe-S) centers, to quinones in the respiratory chain. The immediate electron acceptor for the enzyme in this species is believed to be ubiquinone. Couples the redox reaction to proton translocation (for every two electrons transferred, four hydrogen ions are translocated across the cytoplasmic membrane), and thus conserves the redox energy in a proton gradient. This subunit may bind ubiquinone. The chain is NADH-quinone oxidoreductase subunit H from Bordetella avium (strain 197N).